The chain runs to 885 residues: Translation initiation factor IF-2 (885 aa).

Over residues 123–232 the composition is skewed to basic and acidic residues; sequence ETEAKAKAEA…EAERYSDHHI (110 aa). Residues 123–289 are disordered; that stretch reads ETEAKAKAEA…RNRSTAPESM (167 aa). Basic residues predominate over residues 253–266; it reads GRRARNKNTAKTKR. The span at 267-276 shows a compositional bias: basic and acidic residues; it reads GGKDARDGRE. A tr-type G domain is found at 385–554; sequence PRAPVVTIMG…LLQAEVLELK (170 aa). Positions 394-401 are G1; sequence GHVDHGKT. A GTP-binding site is contributed by 394-401; that stretch reads GHVDHGKT. The interval 419 to 423 is G2; that stretch reads GITQH. A G3 region spans residues 440–443; that stretch reads DTPG. Residues 440-444 and 494-497 contribute to the GTP site; these read DTPGH and NKMD. Residues 494-497 are G4; that stretch reads NKMD. The tract at residues 530–532 is G5; the sequence is SAK.

This sequence belongs to the TRAFAC class translation factor GTPase superfamily. Classic translation factor GTPase family. IF-2 subfamily.

It is found in the cytoplasm. Its function is as follows. One of the essential components for the initiation of protein synthesis. Protects formylmethionyl-tRNA from spontaneous hydrolysis and promotes its binding to the 30S ribosomal subunits. Also involved in the hydrolysis of GTP during the formation of the 70S ribosomal complex. This is Translation initiation factor IF-2 from Shewanella oneidensis (strain ATCC 700550 / JCM 31522 / CIP 106686 / LMG 19005 / NCIMB 14063 / MR-1).